Consider the following 454-residue polypeptide: DNA-binding protein (454 aa).

The interval 1–41 (MSHKKVVAISESSSDEEVPVAPPTAPPKKRQRKAVEEPRGH) is disordered. Residue Tyr129 is modified to Phosphotyrosine; by host. Zn(2+)-binding residues include Cys213 and His215. Residues 226-260 (VEMDVNSENAQRALKENPEKTKIVSNRWGRNVVQF) form a flexible loop region. Cys268, Cys284, Cys325, Cys327, Cys378, and Cys394 together coordinate Zn(2+). The C-terminal arm, DBP binding stretch occupies residues 440–454 (TILPQGQHDDDLVLF).

This sequence belongs to the adenoviridae E2A DNA-binding protein family. Homomultimerizes on viral ssDNA bound to pTP. Forms a initiation complex with viral polymerase, pTP and hosts NFIA and POU2F1/OCT1. Interacts with host SRCAP.

It localises to the host nucleus. Plays a role in the elongation phase of viral strand displacement replication by unwinding the template in an ATP-independent fashion, employing its capacity to form multimers. Also enhances the rate of initiation. Released from template upon second strand synthesis. Assembles in complex with viral pTP, viral pol, host NFIA and host POU2F1/OCT1 on viral origin of replication. Covers the whole ssDNA genome during synthesis. The complementary strand synthesis induces its relese from DNA template. May inhibit cellular transcription mediated by the interaction between host SRCAP and CBP. This chain is DNA-binding protein, found in Canine adenovirus serotype 1 (strain CLL) (CAdV-1).